A 424-amino-acid polypeptide reads, in one-letter code: Histidine--tRNA ligase (424 aa).

The protein belongs to the class-II aminoacyl-tRNA synthetase family. In terms of assembly, homodimer.

The protein resides in the cytoplasm. The catalysed reaction is tRNA(His) + L-histidine + ATP = L-histidyl-tRNA(His) + AMP + diphosphate + H(+). The polypeptide is Histidine--tRNA ligase (Pediococcus pentosaceus (strain ATCC 25745 / CCUG 21536 / LMG 10740 / 183-1w)).